Reading from the N-terminus, the 191-residue chain is C-type lectin domain family 2 member D (191 aa).

The Cytoplasmic portion of the chain corresponds to 1–38 (MHDSNNVEKDITPSELPANPGCLHSKEHSIKATLIWRL). The helical; Signal-anchor for type II membrane protein transmembrane segment at 39–59 (FFLIMFLTIIVCGMVAALSAI) threads the bilayer. Residues 60 to 191 (RANCHQEPSV…WICSKSDIHV (132 aa)) lie on the Extracellular side of the membrane. C75 and C86 form a disulfide bridge. Positions 82–185 (FQRKCFYFSD…HYTERKWICS (104 aa)) constitute a C-type lectin domain. N95 and N147 each carry an N-linked (GlcNAc...) asparagine glycan. C103 and C184 are joined by a disulfide.

Homodimer; disulfide-linked. Post-translationally, N-glycosylated. As to expression, detected in peripheral blood leukocytes, osteoblasts, lymph node, thymus and spleen. Isoform 1, isoform 2 and isoform 4 are expressed in T- and B-lymphocytes, and at lower levels in NK cells. They are also expressed in B-cell lines and LPS-matured monocyte-derived dendritic cells.

The protein resides in the cell membrane. The protein localises to the endoplasmic reticulum. In terms of biological role, receptor for KLRB1 that protects target cells against natural killer cell-mediated lysis. Inhibits osteoclast formation. Inhibits bone resorption. Modulates the release of interferon-gamma. Binds high molecular weight sulfated glycosaminoglycans. The protein is C-type lectin domain family 2 member D (CLEC2D) of Homo sapiens (Human).